The sequence spans 455 residues: N-lysine methyltransferase setd6 (455 aa).

Positions 38-266 (PKVYISTEGT…AGQELFNTYG (229 aa)) constitute an SET domain.

It belongs to the class V-like SAM-binding methyltransferase superfamily. Histone-lysine methyltransferase family. SETD6 subfamily.

It is found in the nucleus. Protein-lysine N-methyltransferase. This is N-lysine methyltransferase setd6 (setd6) from Xenopus laevis (African clawed frog).